A 64-amino-acid polypeptide reads, in one-letter code: Large ribosomal subunit protein uL29 (64 aa).

Belongs to the universal ribosomal protein uL29 family.

This chain is Large ribosomal subunit protein uL29, found in Verminephrobacter eiseniae (strain EF01-2).